Here is a 330-residue protein sequence, read N- to C-terminus: ADP-L-glycero-D-manno-heptose-6-epimerase (330 aa).

Residues 11-12 (FI), 32-33 (DN), Lys-39, Lys-54, 75-79 (EGACS), and Asn-92 contribute to the NADP(+) site. Tyr-139 (proton acceptor) is an active-site residue. Position 143 (Lys-143) interacts with NADP(+). Asn-168 contacts substrate. Residues Val-169 and Lys-177 each contribute to the NADP(+) site. The active-site Proton acceptor is the Lys-177. Residues Arg-179, His-186, 200 to 203 (FGEY), Arg-213, and Tyr-292 each bind substrate.

The protein belongs to the NAD(P)-dependent epimerase/dehydratase family. HldD subfamily. Homopentamer. The cofactor is NADP(+).

It carries out the reaction ADP-D-glycero-beta-D-manno-heptose = ADP-L-glycero-beta-D-manno-heptose. The protein operates within nucleotide-sugar biosynthesis; ADP-L-glycero-beta-D-manno-heptose biosynthesis; ADP-L-glycero-beta-D-manno-heptose from D-glycero-beta-D-manno-heptose 7-phosphate: step 4/4. Functionally, catalyzes the interconversion between ADP-D-glycero-beta-D-manno-heptose and ADP-L-glycero-beta-D-manno-heptose via an epimerization at carbon 6 of the heptose. This chain is ADP-L-glycero-D-manno-heptose-6-epimerase, found in Burkholderia mallei (strain NCTC 10247).